We begin with the raw amino-acid sequence, 279 residues long: Topoisomerase I damage affected protein 4 (279 aa).

Residues 1 to 32 lie on the Extracellular side of the membrane; sequence MNANSTTTAIGLTSPFEKLSFFPHSSNLILAH. A helical transmembrane segment spans residues 33 to 53; it reads LHEIIFSFVFYQLAFSVVAPF. Residues 54–79 are Cytoplasmic-facing; it reads LNKVVFRKHYTTIRDPLLKIDFNVHT. In terms of domain architecture, TLC spans 70 to 271; it reads LLKIDFNVHT…MIRIAKKLAK (202 aa). A helical transmembrane segment spans residues 80–100; that stretch reads VSMIQAVVSNTVLLPTLTTPM. At 101 to 110 the chain is on the extracellular side; that stretch reads HYNVVTYTDS. Residues 111-131 form a helical membrane-spanning segment; the sequence is YSSMVSSLSAGYFIWDLTMCV. Residues 132–135 are Cytoplasmic-facing; the sequence is RYFK. A helical transmembrane segment spans residues 136–156; that stretch reads LYGLEFTGHAIGSVYVMLLSL. The Extracellular portion of the chain corresponds to 157–162; sequence RPFCQP. Residues 163-183 form a helical membrane-spanning segment; sequence WIGRFLIYEASTPFVNINWFI. At 184-192 the chain is on the cytoplasmic side; sequence MQCNAKSKN. Residues 193–213 traverse the membrane as a helical segment; sequence SIPLWFNVVNGLLLMTVFFVV. Residues 214-238 are Extracellular-facing; that stretch reads RICWGSIASALLFRQMWKVRDELPK. The helical transmembrane segment at 239–259 threads the bilayer; sequence FSAVTMMSLNIFMNLLNVLWF. At 260 to 279 the chain is on the cytoplasmic side; sequence KKMIRIAKKLAKPAPTSKLD.

Belongs to the TMEM56 family.

It localises to the membrane. This is Topoisomerase I damage affected protein 4 (TDA4) from Saccharomyces cerevisiae (strain ATCC 204508 / S288c) (Baker's yeast).